A 352-amino-acid chain; its full sequence is Zona pellucida-binding protein 2 (352 aa).

Residues 1–28 form the signal peptide; sequence MAGGGGRPCSPQRALLGMVAIMAVVAEA. Asparagine 110 and asparagine 309 each carry an N-linked (GlcNAc...) asparagine glycan.

The protein belongs to the zona pellucida-binding protein Sp38 family.

It is found in the secreted. Its subcellular location is the cytoplasmic vesicle. It localises to the secretory vesicle. The protein localises to the acrosome. In terms of biological role, may be implicated in the gamete interaction during fertilization. This chain is Zona pellucida-binding protein 2 (ZPBP2), found in Gallus gallus (Chicken).